The primary structure comprises 61 residues: Large ribosomal subunit protein uL30 (61 aa).

Belongs to the universal ribosomal protein uL30 family. Part of the 50S ribosomal subunit.

The polypeptide is Large ribosomal subunit protein uL30 (Bordetella petrii (strain ATCC BAA-461 / DSM 12804 / CCUG 43448)).